A 400-amino-acid polypeptide reads, in one-letter code: Probable glycosyltransferase WbjE (400 aa).

It belongs to the glycosyltransferase group 1 family. Glycosyltransferase 4 subfamily.

It participates in bacterial outer membrane biogenesis; LPS O-antigen biosynthesis. The protein is Probable glycosyltransferase WbjE (wbjE) of Pseudomonas aeruginosa.